The sequence spans 63 residues: uncharacterized protein (63 aa).

This is an uncharacterized protein from Avena byzantina (Oat).